A 201-amino-acid polypeptide reads, in one-letter code: Probable GTP-binding protein EngB (201 aa).

Positions T22–V195 constitute an EngB-type G domain. GTP-binding positions include G30–S37, G57–T61, D75–G78, T142–D145, and F174–S176. Mg(2+) contacts are provided by S37 and T59.

The protein belongs to the TRAFAC class TrmE-Era-EngA-EngB-Septin-like GTPase superfamily. EngB GTPase family. The cofactor is Mg(2+).

In terms of biological role, necessary for normal cell division and for the maintenance of normal septation. The polypeptide is Probable GTP-binding protein EngB (Lachnoclostridium phytofermentans (strain ATCC 700394 / DSM 18823 / ISDg) (Clostridium phytofermentans)).